The following is a 342-amino-acid chain: Eukaryotic translation initiation factor 3 subunit F (342 aa).

The MPN domain maps to 30–166 (VAIQPQAVFS…SRTYISAPIG (137 aa)). A disordered region spans residues 310–342 (TDALAGDGQKDGGDRKQGGDRRNKGRQQRTQEA). A compositionally biased stretch (basic and acidic residues) spans 317-331 (GQKDGGDRKQGGDRR).

It belongs to the eIF-3 subunit F family. Component of the eukaryotic translation initiation factor 3 (eIF-3) complex.

It is found in the cytoplasm. Its function is as follows. Component of the eukaryotic translation initiation factor 3 (eIF-3) complex, which is involved in protein synthesis of a specialized repertoire of mRNAs and, together with other initiation factors, stimulates binding of mRNA and methionyl-tRNAi to the 40S ribosome. The eIF-3 complex specifically targets and initiates translation of a subset of mRNAs involved in cell proliferation. This is Eukaryotic translation initiation factor 3 subunit F from Phaeosphaeria nodorum (strain SN15 / ATCC MYA-4574 / FGSC 10173) (Glume blotch fungus).